We begin with the raw amino-acid sequence, 617 residues long: MSDIIQLLPDHVANQIAAGEVVQRPASVIKELLENSIDAKASRIQVVIKDAGKTLIQIVDDGIGMSLTDARMSFERHATSKIKLADDLFSLKTKGFRGEALASIAAIAHVELRTKTENDEVGTCLKVEGSEVVSQDAFVTPKGTSISVKNLFYNIPARRNFLKSDNVETRHIIDEFQRVALAHPNISFSLLHNGNELFQLPITNFRQRITNILGGKTNEKLVPVEEDTEIAKISGFVGKPEFAKKSRGEQFFFVNDRFIKSPYLNHAVTASFEGLLKDKSYPSYFLYLEVDPKSIDINIHPTKTEIKFDDEHALYAILKSSIKHSLGQFNVAPILDFERDSELDTPYDYKNKEADAPQVEVDRNFNPFQNEGSSKTQFSGGTNFRKDKPAEWESIYSGMQSETDTDIDIRHIEFESEEVTGNLFGAREEQTEKSTFQVQKKYIVSTLKSGILVIDQHRAHTRVLYEELLKNITVSSAVSQQLLFPLLLQFNSHEVEMLKEIKDSLEQTGFVFSSIKKEEVEISGIPTLISESEVEILLEQLIADFEKDVPDNGFSQTDLLAKSLANSMAVRSGTLLNSAEQQHIVNRLFACKEPALSPFNKTVFTTLSVDELDKKFA.

It belongs to the DNA mismatch repair MutL/HexB family.

In terms of biological role, this protein is involved in the repair of mismatches in DNA. It is required for dam-dependent methyl-directed DNA mismatch repair. May act as a 'molecular matchmaker', a protein that promotes the formation of a stable complex between two or more DNA-binding proteins in an ATP-dependent manner without itself being part of a final effector complex. This is DNA mismatch repair protein MutL from Christiangramia forsetii (strain DSM 17595 / CGMCC 1.15422 / KT0803) (Gramella forsetii).